Here is a 427-residue protein sequence, read N- to C-terminus: Adenylosuccinate synthetase (427 aa).

Residues 12-18 (GDEGKGK) and 40-42 (GHT) each bind GTP. Residue Asp-13 is the Proton acceptor of the active site. Residues Asp-13 and Gly-40 each contribute to the Mg(2+) site. IMP-binding positions include 13-16 (DEGK), 38-41 (NAGH), Thr-128, Arg-142, Gln-223, Thr-238, and Arg-302. The active-site Proton donor is the His-41. A substrate-binding site is contributed by 298-304 (TTTGRAR). GTP contacts are provided by residues Arg-304, 330-332 (KLD), and 412-414 (AVG).

Belongs to the adenylosuccinate synthetase family. In terms of assembly, homodimer. The cofactor is Mg(2+).

It is found in the cytoplasm. It carries out the reaction IMP + L-aspartate + GTP = N(6)-(1,2-dicarboxyethyl)-AMP + GDP + phosphate + 2 H(+). Its pathway is purine metabolism; AMP biosynthesis via de novo pathway; AMP from IMP: step 1/2. In terms of biological role, plays an important role in the de novo pathway of purine nucleotide biosynthesis. Catalyzes the first committed step in the biosynthesis of AMP from IMP. This is Adenylosuccinate synthetase from Desulfitobacterium hafniense (strain Y51).